A 378-amino-acid chain; its full sequence is Probable dihydroorotase-like protein (378 aa).

It belongs to the metallo-dependent hydrolases superfamily. DHOase family. PyrC' subfamily.

Functionally, non-functional DHOase. The protein is Probable dihydroorotase-like protein (pyrC') of Helicobacter pylori (strain J99 / ATCC 700824) (Campylobacter pylori J99).